Reading from the N-terminus, the 360-residue chain is Photosystem II protein D1 (360 aa).

A run of 3 helical transmembrane segments spans residues 29–46, 118–133, and 142–156; these read YIGW…TATT, HFLL…EWEF, and WISV…AASA. Position 118 (H118) interacts with chlorophyll a. A pheophytin a-binding site is contributed by W126. The [CaMn4O5] cluster site is built by D170 and E189. Residues 197–218 traverse the membrane as a helical segment; the sequence is FHQLGVAGVFGGSLFSAMHGSL. Residue H198 coordinates chlorophyll a. Residues H215 and 264–265 each bind a quinone; that span reads SF. H215 contacts Fe cation. H272 is a Fe cation binding site. Residues 274 to 288 traverse the membrane as a helical segment; the sequence is FLGLWPVVGIWFTAL. Residues H332, E333, D342, and A344 each contribute to the [CaMn4O5] cluster site. Residues 345 to 360 constitute a propeptide that is removed on maturation; that stretch reads SGESLPVALTAPAVIG.

This sequence belongs to the reaction center PufL/M/PsbA/D family. In terms of assembly, PSII is composed of 1 copy each of membrane proteins PsbA, PsbB, PsbC, PsbD, PsbE, PsbF, PsbH, PsbI, PsbJ, PsbK, PsbL, PsbM, PsbT, PsbX, PsbY, PsbZ, Psb30/Ycf12, at least 3 peripheral proteins of the oxygen-evolving complex and a large number of cofactors. It forms dimeric complexes. The cofactor is The D1/D2 heterodimer binds P680, chlorophylls that are the primary electron donor of PSII, and subsequent electron acceptors. It shares a non-heme iron and each subunit binds pheophytin, quinone, additional chlorophylls, carotenoids and lipids. D1 provides most of the ligands for the Mn4-Ca-O5 cluster of the oxygen-evolving complex (OEC). There is also a Cl(-1) ion associated with D1 and D2, which is required for oxygen evolution. The PSII complex binds additional chlorophylls, carotenoids and specific lipids.. Tyr-161 forms a radical intermediate that is referred to as redox-active TyrZ, YZ or Y-Z. Post-translationally, C-terminally processed by CTPA; processing is essential to allow assembly of the oxygen-evolving complex and thus photosynthetic growth.

Its subcellular location is the plastid. The protein resides in the chloroplast thylakoid membrane. It catalyses the reaction 2 a plastoquinone + 4 hnu + 2 H2O = 2 a plastoquinol + O2. Its function is as follows. Photosystem II (PSII) is a light-driven water:plastoquinone oxidoreductase that uses light energy to abstract electrons from H(2)O, generating O(2) and a proton gradient subsequently used for ATP formation. It consists of a core antenna complex that captures photons, and an electron transfer chain that converts photonic excitation into a charge separation. The D1/D2 (PsbA/PsbD) reaction center heterodimer binds P680, the primary electron donor of PSII as well as several subsequent electron acceptors. The polypeptide is Photosystem II protein D1 (Guillardia theta (Cryptophyte)).